A 572-amino-acid chain; its full sequence is Mitochondrial distribution and morphology protein 34 (572 aa).

The SMP-LTD domain maps to Met-1–Leu-195. 3 disordered regions span residues Thr-210 to Leu-239, Ser-330 to Pro-423, and Arg-455 to Ala-482. The span at Ser-330–Phe-347 shows a compositional bias: polar residues. Residues Arg-358 to Arg-370 show a composition bias toward basic residues. Residues Val-371 to Asp-381 are compositionally biased toward basic and acidic residues. Polar residues-rich tracts occupy residues Ser-387–Ser-400 and Pro-460–Pro-480.

Belongs to the MDM34 family. In terms of assembly, component of the ER-mitochondria encounter structure (ERMES) or MDM complex, composed of mmm1, mdm10, mdm12 and mdm34.

The protein resides in the mitochondrion outer membrane. Functionally, component of the ERMES/MDM complex, which serves as a molecular tether to connect the endoplasmic reticulum (ER) and mitochondria. Components of this complex are involved in the control of mitochondrial shape and protein biogenesis, and function in nonvesicular lipid trafficking between the ER and mitochondria. Mdm34 is required for the interaction of the ER-resident membrane protein mmm1 and the outer mitochondrial membrane-resident beta-barrel protein mdm10. This is Mitochondrial distribution and morphology protein 34 from Aspergillus clavatus (strain ATCC 1007 / CBS 513.65 / DSM 816 / NCTC 3887 / NRRL 1 / QM 1276 / 107).